We begin with the raw amino-acid sequence, 365 residues long: Mitogen-activated protein kinase HOG1 (365 aa).

Positions Y20 to L306 constitute a Protein kinase domain. Residues V26–V34 and K49 contribute to the ATP site. D148 serves as the catalytic Proton acceptor. The short motif at T178 to Y180 is the TXY element.

The protein belongs to the protein kinase superfamily. Ser/Thr protein kinase family. MAP kinase subfamily. HOG1 sub-subfamily. Requires Mg(2+) as cofactor.

The protein resides in the cytoplasm. Its subcellular location is the nucleus. The catalysed reaction is L-seryl-[protein] + ATP = O-phospho-L-seryl-[protein] + ADP + H(+). The enzyme catalyses L-threonyl-[protein] + ATP = O-phospho-L-threonyl-[protein] + ADP + H(+). Its function is as follows. Proline-directed serine/threonine-protein kinase involved in a signal transduction pathway that is activated by changes in the osmolarity of the extracellular environment. Controls osmotic regulation of transcription of target genes. Involved in environmental stress response, hyphal growth, conidiation and possibly secondary metabolism such as ustiloxin biosynthesis or the biosynthesis of other phytotoxic compounds that are inhibitory to rice shoot growth during seed germination. Plays a key role in responses to cell wall and membrane stresses but not oxidative stress. The polypeptide is Mitogen-activated protein kinase HOG1 (Ustilaginoidea virens (Rice false smut fungus)).